Reading from the N-terminus, the 1004-residue chain is Bifunctional glutamine synthetase adenylyltransferase/adenylyl-removing enzyme (1004 aa).

The adenylyl removase stretch occupies residues 1–497; sequence MCCTTVVVVR…LHAKLFYQPL (497 aa). Residues 502 to 1004 are adenylyl transferase; the sequence is GPASLEIRHG…KTFVRKVFGS (503 aa).

Belongs to the GlnE family. Mg(2+) is required as a cofactor.

It catalyses the reaction [glutamine synthetase]-O(4)-(5'-adenylyl)-L-tyrosine + phosphate = [glutamine synthetase]-L-tyrosine + ADP. The catalysed reaction is [glutamine synthetase]-L-tyrosine + ATP = [glutamine synthetase]-O(4)-(5'-adenylyl)-L-tyrosine + diphosphate. Functionally, involved in the regulation of glutamine synthetase GlnA, a key enzyme in the process to assimilate ammonia. When cellular nitrogen levels are high, the C-terminal adenylyl transferase (AT) inactivates GlnA by covalent transfer of an adenylyl group from ATP to specific tyrosine residue of GlnA, thus reducing its activity. Conversely, when nitrogen levels are low, the N-terminal adenylyl removase (AR) activates GlnA by removing the adenylyl group by phosphorolysis, increasing its activity. The regulatory region of GlnE binds the signal transduction protein PII (GlnB) which indicates the nitrogen status of the cell. This is Bifunctional glutamine synthetase adenylyltransferase/adenylyl-removing enzyme from Mycobacterium leprae (strain TN).